We begin with the raw amino-acid sequence, 313 residues long: C-type lectin domain-containing protein 162 (313 aa).

The first 17 residues, 1-17 (MNIFTLLFIYFLSDTVA), serve as a signal peptide directing secretion. N-linked (GlcNAc...) asparagine glycosylation is found at Asn28 and Asn41. The 118-residue stretch at 28-145 (NATGCFQFFR…DAMFLPFVCE (118 aa)) folds into the C-type lectin domain. Cys49 and Cys144 are oxidised to a cystine. Asn213 carries an N-linked (GlcNAc...) asparagine glycan. Residues 244 to 313 (VSQTETEMSR…RSKTIQISRG (70 aa)) form a disordered region. The segment covering 250–259 (EMSRSRKEKE) has biased composition (basic and acidic residues). N-linked (GlcNAc...) asparagine glycans are attached at residues Asn279 and Asn300. Basic and acidic residues predominate over residues 291 to 304 (SKEKREREENETIR).

Its subcellular location is the secreted. The chain is C-type lectin domain-containing protein 162 (clec-162) from Caenorhabditis elegans.